Consider the following 440-residue polypeptide: uncharacterized protein (440 aa).

The next 10 helical transmembrane spans lie at 26–46 (NGLIWCWWLFVISLVLASSTF), 59–79 (FVFWILALIFGVAVAFINGVL), 96–116 (FFLGFFFPQMAFCNALWLKLK), 138–158 (LTLSVFVVWGIYCVLATSIYL), 211–231 (FLVFFIIPTITLITLGCYLFA), 241–261 (LRKPLSTLSIVIMLTDVVGII), 263–283 (WIIIDILLIWLNVPFVIFVIF), 284–304 (WVIKLVLPLAMIGTFVSSLTI), 394–414 (FLIIFFSIISLILATIGSVFI), and 418–438 (IVQISIPFYVIGGVIWFFTFI).

The protein to M.pneumoniae MPN_087.

It is found in the cell membrane. This is an uncharacterized protein from Mycoplasma pneumoniae (strain ATCC 29342 / M129 / Subtype 1) (Mycoplasmoides pneumoniae).